Here is a 324-residue protein sequence, read N- to C-terminus: Phosphate transport system permease protein PstC (324 aa).

A run of 6 helical transmembrane segments spans residues 29–49, 87–107, 126–146, 173–193, 235–255, and 291–311; these read LLLT…ALSM, IVTA…IAFF, LLAG…LVPV, PLGI…IPFI, VIGG…AVAF, and SALL…LVIA. Positions 83-311 constitute an ABC transmembrane type-1 domain; that stretch reads IYGTIVTALI…IVTFAVLVIA (229 aa).

Belongs to the binding-protein-dependent transport system permease family. CysTW subfamily.

It is found in the cell inner membrane. In terms of biological role, part of a binding-protein-dependent transport system for phosphate; probably responsible for the translocation of the substrate across the membrane. The protein is Phosphate transport system permease protein PstC (pstC) of Xylella fastidiosa (strain Temecula1 / ATCC 700964).